The following is a 199-amino-acid chain: Large ribosomal subunit protein uL13A (199 aa).

Serine 2 carries the post-translational modification N-acetylserine. A Glycyl lysine isopeptide (Lys-Gly) (interchain with G-Cter in ubiquitin) cross-link involves residue lysine 177.

This sequence belongs to the universal ribosomal protein uL13 family. As to quaternary structure, component of the large ribosomal subunit (LSU). Mature yeast ribosomes consist of a small (40S) and a large (60S) subunit. The 40S small subunit contains 1 molecule of ribosomal RNA (18S rRNA) and 33 different proteins (encoded by 57 genes). The large 60S subunit contains 3 rRNA molecules (25S, 5.8S and 5S rRNA) and 46 different proteins (encoded by 81 genes). N-terminally acetylated by acetyltransferase NatA.

The protein localises to the cytoplasm. In terms of biological role, component of the ribosome, a large ribonucleoprotein complex responsible for the synthesis of proteins in the cell. The small ribosomal subunit (SSU) binds messenger RNAs (mRNAs) and translates the encoded message by selecting cognate aminoacyl-transfer RNA (tRNA) molecules. The large subunit (LSU) contains the ribosomal catalytic site termed the peptidyl transferase center (PTC), which catalyzes the formation of peptide bonds, thereby polymerizing the amino acids delivered by tRNAs into a polypeptide chain. The nascent polypeptides leave the ribosome through a tunnel in the LSU and interact with protein factors that function in enzymatic processing, targeting, and the membrane insertion of nascent chains at the exit of the ribosomal tunnel. This is Large ribosomal subunit protein uL13A from Saccharomyces cerevisiae (strain ATCC 204508 / S288c) (Baker's yeast).